Reading from the N-terminus, the 2038-residue chain is Non-reducing polyketide synthase ZEA1 (2038 aa).

Positions 9–246 are N-terminal acylcarrier protein transacylase domain (SAT); the sequence is LLFGDQTDSW…NELNIHALQH (238 aa). The Ketosynthase family 3 (KS3) domain occupies 364 to 794; it reads PGRIAIVGMA…GGNACILLED (431 aa). Catalysis depends on for beta-ketoacyl synthase activity residues cysteine 537, histidine 672, and histidine 711. The interval 888–1172 is malonyl-CoA:ACP transacylase (MAT) domain; it reads VFVFTGQGSH…VCSSFVRATL (285 aa). Serine 979 serves as the catalytic For acyl/malonyl transferase activity. Residues 1221-1572 are product template (PT) domain; that stretch reads SLLNLPTYAW…HFHEVENAVL (352 aa). The segment at 1254–1405 is N-terminal hotdog fold; sequence HETFKANIST…GQLIQARWDK (152 aa). The region spanning 1254-1573 is the PKS/mFAS DH domain; the sequence is HETFKANIST…FHEVENAVLD (320 aa). The interval 1425–1573 is C-terminal hotdog fold; that stretch reads ISHRLQPQIL…FHEVENAVLD (149 aa). The Carrier domain maps to 1616–1693; the sequence is QSDAHVLDSI…DLRRVFAPKS (78 aa). Serine 1653 is subject to O-(pantetheine 4'-phosphoryl)serine. The segment at 1700-1738 is disordered; sequence NDLSRPSLVDDTSQALQSSGSESFDQPPTSVTSTSDSGS. Polar residues predominate over residues 1709 to 1737; that stretch reads DDTSQALQSSGSESFDQPPTSVTSTSDSG. The tract at residues 1778–1882 is thioesterase (TE) domain; the sequence is TGTIATYIHL…PRSKTVEDKN (105 aa). The For thioesterase activity role is filled by histidine 2021.

It participates in mycotoxin biosynthesis. Its function is as follows. Non-reducing polyketide synthase; part of the gene cluster that mediates the biosynthesis of zearalenone (ZEA), a nonsteroid estrogen that is a contaminant of cereal grains and causes estrogenic disorders in humans and animals. The ZEA backbone is synthesized from a single acetyl-CoA molecule and eight malonyl-CoA molecules. The reducing polyketide synthase ZEA2 is proposed to synthesize a reduced hexaketide intermediate by using different combinations of its reductive domains during each round of condensation. The hexaketide thioester is then transacylated to the non-reducing polyketide synthase ZEA1 and is further condensed with three malonyl-CoAs without reductive tailoring to yield a mixed reduced/unreduced nonaketide. ZEA1 must be able to interact with ZEA2 to facilitate starter-unit acyltransfer and initiate polyketide biosynthesis. ZEA1 also mediates the required C2-C7 cyclization to form the resorcylate core and catalyzes the formation of the macrolactone. ZEA1 exhibits broad starter-unit specificities toward fatty acyl-CoAs ranging in sizes between C6 and C16 and displays the highest activity toward decanoyl-CoA. ZEB1 is then responsible for the chemical conversion of beta-zearalenonol (beta-ZOL) to ZEA in the biosynthetic pathway. In Gibberella zeae (strain ATCC MYA-4620 / CBS 123657 / FGSC 9075 / NRRL 31084 / PH-1) (Wheat head blight fungus), this protein is Non-reducing polyketide synthase ZEA1.